The following is a 486-amino-acid chain: Probable cytosol aminopeptidase (486 aa).

This sequence belongs to the peptidase M17 family. Mn(2+) is required as a cofactor.

It localises to the cytoplasm. The catalysed reaction is Release of an N-terminal amino acid, Xaa-|-Yaa-, in which Xaa is preferably Leu, but may be other amino acids including Pro although not Arg or Lys, and Yaa may be Pro. Amino acid amides and methyl esters are also readily hydrolyzed, but rates on arylamides are exceedingly low.. It catalyses the reaction Release of an N-terminal amino acid, preferentially leucine, but not glutamic or aspartic acids.. Functionally, presumably involved in the processing and regular turnover of intracellular proteins. Catalyzes the removal of unsubstituted N-terminal amino acids from various peptides. The polypeptide is Probable cytosol aminopeptidase (pepA) (Synechococcus elongatus (strain ATCC 33912 / PCC 7942 / FACHB-805) (Anacystis nidulans R2)).